Here is a 215-residue protein sequence, read N- to C-terminus: Protein-L-isoaspartate O-methyltransferase (215 aa).

Serine 62 is a catalytic residue.

The protein belongs to the methyltransferase superfamily. L-isoaspartyl/D-aspartyl protein methyltransferase family.

Its subcellular location is the cytoplasm. The catalysed reaction is [protein]-L-isoaspartate + S-adenosyl-L-methionine = [protein]-L-isoaspartate alpha-methyl ester + S-adenosyl-L-homocysteine. Catalyzes the methyl esterification of L-isoaspartyl residues in peptides and proteins that result from spontaneous decomposition of normal L-aspartyl and L-asparaginyl residues. It plays a role in the repair and/or degradation of damaged proteins. In Rhodopseudomonas palustris (strain BisA53), this protein is Protein-L-isoaspartate O-methyltransferase.